A 199-amino-acid chain; its full sequence is Recombination protein RecR (199 aa).

Residues 58 to 73 (CQTCRILSETDLCSLC) form a C4-type zinc finger. One can recognise a Toprim domain in the interval 81 to 176 (GQLCVVEMPS…TTTRIAHGVP (96 aa)).

It belongs to the RecR family.

May play a role in DNA repair. It seems to be involved in an RecBC-independent recombinational process of DNA repair. It may act with RecF and RecO. The sequence is that of Recombination protein RecR from Nitrosococcus oceani (strain ATCC 19707 / BCRC 17464 / JCM 30415 / NCIMB 11848 / C-107).